We begin with the raw amino-acid sequence, 311 residues long: Malate dehydrogenase (311 aa).

NAD(+) contacts are provided by residues 7–13 (GAAGGIG) and aspartate 34. Arginine 81 and arginine 87 together coordinate substrate. NAD(+)-binding positions include asparagine 94 and 117 to 119 (ITN). Positions 119 and 153 each coordinate substrate. Histidine 177 acts as the Proton acceptor in catalysis. Methionine 227 is a binding site for NAD(+).

It belongs to the LDH/MDH superfamily. MDH type 1 family. Homodimer.

The enzyme catalyses (S)-malate + NAD(+) = oxaloacetate + NADH + H(+). Its function is as follows. Catalyzes the reversible oxidation of malate to oxaloacetate. This is Malate dehydrogenase from Vibrio campbellii (strain ATCC BAA-1116).